Consider the following 512-residue polypeptide: Maturase K (512 aa).

Belongs to the intron maturase 2 family. MatK subfamily.

It is found in the plastid. The protein localises to the chloroplast. Its function is as follows. Usually encoded in the trnK tRNA gene intron. Probably assists in splicing its own and other chloroplast group II introns. The sequence is that of Maturase K from Filarum manserichense.